Here is a 234-residue protein sequence, read N- to C-terminus: Protein SSP120 (234 aa).

The first 22 residues, Met-1–Ala-22, serve as a signal peptide directing secretion. 2 consecutive EF-hand domains span residues Leu-52–Glu-87 and Met-108–Phe-143. Thr-212 is subject to Phosphothreonine.

The protein is Protein SSP120 (SSP120) of Saccharomyces cerevisiae (strain ATCC 204508 / S288c) (Baker's yeast).